A 197-amino-acid polypeptide reads, in one-letter code: Surfactant protein C (197 aa).

A propeptide spanning residues M1–R23 is cleaved from the precursor. S-palmitoyl cysteine attachment occurs at residues C28 and C29. Positions H59–I197 are excised as a propeptide. The BRICHOS domain maps to F94 to I197. Disulfide bonds link C120-C148 and C121-C189.

The protein localises to the secreted. It localises to the extracellular space. It is found in the surface film. Functionally, pulmonary surfactant associated proteins promote alveolar stability by lowering the surface tension at the air-liquid interface in the peripheral air spaces. The polypeptide is Surfactant protein C (Homo sapiens (Human)).